Reading from the N-terminus, the 120-residue chain is UPF0102 protein NT01CX_2205 (120 aa).

It belongs to the UPF0102 family.

The chain is UPF0102 protein NT01CX_2205 from Clostridium novyi (strain NT).